The chain runs to 286 residues: NADPH-dependent 7-cyano-7-deazaguanine reductase (286 aa).

92–94 (IES) is a binding site for substrate. Residue 94–95 (SK) participates in NADPH binding. Cys-194 (thioimide intermediate) is an active-site residue. The Proton donor role is filled by Asp-201. Residue 233-234 (HE) participates in substrate binding. 262–263 (RG) lines the NADPH pocket.

This sequence belongs to the GTP cyclohydrolase I family. QueF type 2 subfamily. As to quaternary structure, homodimer.

The protein resides in the cytoplasm. It catalyses the reaction 7-aminomethyl-7-carbaguanine + 2 NADP(+) = 7-cyano-7-deazaguanine + 2 NADPH + 3 H(+). It functions in the pathway tRNA modification; tRNA-queuosine biosynthesis. In terms of biological role, catalyzes the NADPH-dependent reduction of 7-cyano-7-deazaguanine (preQ0) to 7-aminomethyl-7-deazaguanine (preQ1). The polypeptide is NADPH-dependent 7-cyano-7-deazaguanine reductase (Shewanella oneidensis (strain ATCC 700550 / JCM 31522 / CIP 106686 / LMG 19005 / NCIMB 14063 / MR-1)).